We begin with the raw amino-acid sequence, 392 residues long: ATP phosphoribosyltransferase regulatory subunit (392 aa).

It belongs to the class-II aminoacyl-tRNA synthetase family. HisZ subfamily. In terms of assembly, heteromultimer composed of HisG and HisZ subunits.

It localises to the cytoplasm. The protein operates within amino-acid biosynthesis; L-histidine biosynthesis; L-histidine from 5-phospho-alpha-D-ribose 1-diphosphate: step 1/9. Required for the first step of histidine biosynthesis. May allow the feedback regulation of ATP phosphoribosyltransferase activity by histidine. This Synechococcus sp. (strain CC9902) protein is ATP phosphoribosyltransferase regulatory subunit.